Here is a 1783-residue protein sequence, read N- to C-terminus: Doublecortin domain-containing protein 1 (1783 aa).

The disordered stretch occupies residues 93-133; the sequence is GLQDCSTHQTASDHSHDEISDLDSYKSNSKNNSCSISASKR. The segment covering 117-131 has biased composition (low complexity); that stretch reads YKSNSKNNSCSISAS. Positions 168-252 constitute a Doublecortin 1 domain; it reads KLQPRVIKVT…FLNPFKKIKD (85 aa). A Ricin B-type lectin 1 domain is found at 702 to 800; sequence WLITKTGMIL…HIHHGAWTTA (99 aa). Residues 860–880 form a disordered region; it reads ASAQRWAIKHEGTSKPGQWKH. The region spanning 925–1015 is the Doublecortin 2 domain; it reads PICKTTEPYA…ELWINPDLSI (91 aa). The region spanning 1151–1266 is the Ricin B-type lectin 2 domain; that stretch reads SCSPKHSKLH…GAANQKWHYM (116 aa).

Interacts with dynein intermediate chain, tubulin, RAB8A, RAB3IP, NUDC, PAFAH1B1 and DCTN1.

It is found in the midbody. The protein resides in the midbody ring. Its subcellular location is the cytoplasm. It localises to the cytoskeleton. The protein localises to the spindle. Functionally, microtubule-binding protein which plays an important role in mediating dynein-dependent transport of RAB8A-positive vesicles to the midbody during cytokinesis. This Homo sapiens (Human) protein is Doublecortin domain-containing protein 1.